A 42-amino-acid polypeptide reads, in one-letter code: Cytochrome b6-f complex subunit 7 (42 aa).

A helical membrane pass occupies residues 19 to 37; the sequence is AVVCFSMTLFGLSLGFGLL.

Belongs to the PetM family. The 4 large subunits of the cytochrome b6-f complex are cytochrome b6, subunit IV (17 kDa polypeptide, PetD), cytochrome f and the Rieske protein, while the 4 small subunits are PetG, PetL, PetM and PetN. The complex functions as a dimer.

It localises to the plastid. The protein localises to the chloroplast thylakoid membrane. In terms of biological role, component of the cytochrome b6-f complex, which mediates electron transfer between photosystem II (PSII) and photosystem I (PSI), cyclic electron flow around PSI, and state transitions. In Phaeodactylum tricornutum (strain CCAP 1055/1), this protein is Cytochrome b6-f complex subunit 7.